A 612-amino-acid polypeptide reads, in one-letter code: Glycosyltransferase 25 family member (612 aa).

The N-terminal stretch at 1-20 (MNKQVIFGLLLACILVCISG) is a signal peptide. N106, N227, N263, and N524 each carry an N-linked (GlcNAc...) asparagine glycan. Residues 609 to 612 (HQEL) carry the Prevents secretion from ER motif.

This sequence belongs to the glycosyltransferase 25 family.

It localises to the endoplasmic reticulum lumen. This Drosophila melanogaster (Fruit fly) protein is Glycosyltransferase 25 family member.